The chain runs to 274 residues: Large ribosomal subunit protein uL2 (274 aa).

Disordered regions lie at residues Leu34 to Ile54 and Val224 to Ala261.

This sequence belongs to the universal ribosomal protein uL2 family. In terms of assembly, part of the 50S ribosomal subunit. Forms a bridge to the 30S subunit in the 70S ribosome.

Functionally, one of the primary rRNA binding proteins. Required for association of the 30S and 50S subunits to form the 70S ribosome, for tRNA binding and peptide bond formation. It has been suggested to have peptidyltransferase activity; this is somewhat controversial. Makes several contacts with the 16S rRNA in the 70S ribosome. The chain is Large ribosomal subunit protein uL2 from Ectopseudomonas mendocina (strain ymp) (Pseudomonas mendocina).